An 82-amino-acid polypeptide reads, in one-letter code: Antitoxin MazE8 (82 aa).

In terms of assembly, forms a complex with cognate toxin MazF8.

Antitoxin component of a type II toxin-antitoxin (TA) system. Its cognate toxin is MazF8. This Mycobacterium tuberculosis (strain ATCC 25618 / H37Rv) protein is Antitoxin MazE8 (mazE8).